Consider the following 201-residue polypeptide: Putative ankyrin repeat protein YahD (201 aa).

6 ANK repeats span residues 5–34 (NLPA…DINT), 38–67 (QGKT…DINK), 71–100 (TCLN…DLNC), 104–134 (FGGV…NVNQ), 138–172 (VGWT…SPHL), and 176–201 (YGKT…AAGA).

This Escherichia coli (strain K12) protein is Putative ankyrin repeat protein YahD (yahD).